Consider the following 408-residue polypeptide: uncharacterized protein (408 aa).

4Fe-4S ferredoxin-type domains are found at residues 42-72 (IPPIVKFPEKCISCEGCKESCPAFAIEMIYN), 78-107 (KLPVIDEGSCVACANCIEVCPTGVLEMDKH), 122-151 (SNLIIDEEVCVRCGNCERACPINVIERKEG), 151-181 (GKYVINMALCISCKECIKVCPIENAIVVVDE), 212-241 (KIPHIVSGLCVSCGICKDVCVGEIDLNEKK), 233-265 (GEIDLNEKKVVECVKCGLCIEVCSTTAIRIYKP), 273-302 (ICYVIDEDLCIGCRICQKVCGSGAIKISKE), and 304-333 (KLPYIVPELCVRGGACARECPVGAIKVVKP). Cys52, Cys55, Cys58, Cys62, Cys87, Cys90, Cys93, Cys97, Cys131, Cys134, Cys137, Cys141, Cys160, Cys163, Cys166, and Cys170 together coordinate [4Fe-4S] cluster. Residues Cys282, Cys285, Cys288, and Cys292 each contribute to the [4Fe-4S] cluster site.

This is an uncharacterized protein from Methanocaldococcus jannaschii (strain ATCC 43067 / DSM 2661 / JAL-1 / JCM 10045 / NBRC 100440) (Methanococcus jannaschii).